A 324-amino-acid chain; its full sequence is PDZ domain-containing protein MAGIX (324 aa).

The disordered stretch occupies residues 1–26; sequence MDSRAGNTADPRGGRRGGGLQGSRSP. The region spanning 128 to 212 is the PDZ domain; that stretch reads SVELTRGPAG…HLCLVLQRPQ (85 aa). Positions 216-241 are enriched in basic and acidic residues; the sequence is GSRIKEVGGHRKTDRSLDPRGSRVES. Positions 216–263 are disordered; that stretch reads GSRIKEVGGHRKTDRSLDPRGSRVESRSTISPVHHRPKTRTSPRPSPE. S261 bears the Phosphoserine mark.

This Mus musculus (Mouse) protein is PDZ domain-containing protein MAGIX (Magix).